The chain runs to 145 residues: Large ribosomal subunit protein uL16 (145 aa).

Residues 1 to 17 (MLMPKRVKHRKVQRGRM) are compositionally biased toward basic residues. Residues 1–20 (MLMPKRVKHRKVQRGRMKGV) form a disordered region.

The protein belongs to the universal ribosomal protein uL16 family. Part of the 50S ribosomal subunit.

Binds 23S rRNA and is also seen to make contacts with the A and possibly P site tRNAs. This Acetivibrio thermocellus (strain ATCC 27405 / DSM 1237 / JCM 9322 / NBRC 103400 / NCIMB 10682 / NRRL B-4536 / VPI 7372) (Clostridium thermocellum) protein is Large ribosomal subunit protein uL16.